The chain runs to 983 residues: MMARRTVDFKKLIEQLRARATDKAEALNTVSQLEIGAVDAQDVTASAVRAFVGALPSSGYHFGFVRQNVVFYLLSHATVQTARDPLYAAEQLHEQLDRFLRHQHDGGGDEDRLPFYHNGATLTAFQKLLQTLREIQTVIAEQSGGTAAAADLIASNNASTERRGKKGGSSSGGQQPLVRRVITQLETAATEARPYVNCRAVAELLDLTYQRLIYWACTLMPYVLFRRDTDTELDTVLLMHFFYTHYRSVNGDLAVEFQNYVKNSVRHMSSFVSSDIDGDQKPGAEHMRDVSYKLFVGNLQARDASGLMFPIISTRISTVNLYLSPERMFFHPGLISRLLSEEVSPRANLDAYARVCDRVLEDHLHTPRRVQRLLDLTQMVMRLVELGFNHDTCAAYAQMALIQPASQKSSLFVSEIREKLIQIIYNFYTFFMCLYVYSPTFLFDHRRRLILEQHRSTLIGSKEELQHVWSNVTLNVNTHFAVQYTEEDFEAHTKGATEAEREYLYRDLHSKWGVHLFTLRPSRGAAGAASPLPPLDGVTRSDILRECALVNLNEGRVNYASLLAFSHHPEFPSIFAQLVVVTEFSEIFGIPQGLFQAVGSPRLFALIQLCRVLLPEQVTLYQNLVSIYNLTTFVKHIDAAVFKTVRDCVFDIATTLEHLSGVPVTPNVDLLAELMARSVAHNLYTTVNPLIEDVMRSSAGSLRNYLRHTRLCFGLARGRARLSEDGVTVYVEVQGQYGLRVPTTRFVEQLRELVRRDRLLAENLRGLNERLLSVRVRVRQISSDTEEVSRHAKGHRTVAQMSKALKKTASKIKMLETRVTLALEQAQRSNGAVVTAVQRALAVFDVLSRENLERRGAQLCLTEATSLLHRHRALAPMTWPAGTGVAAAAEADGALREFLEAPWESAPQPPRLRMTPDTDHEESTAGATSVPEVLGARYEPAHLAASDLLNWYIVPVSQAQQDILSSIDPPAGSTSVSLPPASP.

The segment at 474 to 983 (LNVNTHFAVQ…TSVSLPPASP (510 aa)) is interaction with large tegument protein. A disordered region spans residues 902-932 (PWESAPQPPRLRMTPDTDHEESTAGATSVPE). Positions 914 to 923 (MTPDTDHEES) are enriched in basic and acidic residues.

Belongs to the herpesviridae inner tegument protein family. As to quaternary structure, interacts (via C-terminus) with the large tegument protein/LTP (via N-terminus).

The protein resides in the virion tegument. The protein localises to the host cytoplasm. Its subcellular location is the host nucleus. It localises to the host Golgi apparatus. It is found in the host trans-Golgi network. In terms of biological role, plays an essential role in cytoplasmic secondary envelopment during viral egress. Interacts with the capsid via the large tegument protein/LTP and participates in its transport to the host trans-Golgi network (TGN) where secondary envelopment occurs. Modulates tegumentation and capsid accumulation at the viral assembly complex. The polypeptide is Inner tegument protein (UL47) (Homo sapiens (Human)).